Consider the following 68-residue polypeptide: Large ribosomal subunit protein bL35 (68 aa).

Composition is skewed to basic residues over residues 1–15 and 23–38; these read MPKM…KRFK and TARK…HKSS. The interval 1-38 is disordered; it reads MPKMKSHSGTKKRFKVTGSGKVTARKAGKRHLNEHKSS.

This sequence belongs to the bacterial ribosomal protein bL35 family.

In Cutibacterium acnes (strain DSM 16379 / KPA171202) (Propionibacterium acnes), this protein is Large ribosomal subunit protein bL35.